We begin with the raw amino-acid sequence, 778 residues long: Receptor like protein 28 (778 aa).

Positions Met1–Ser24 are cleaved as a signal peptide. Residues Ser25 to Lys739 are Extracellular-facing. N-linked (GlcNAc...) asparagine glycans are attached at residues Asn60, Asn72, Asn93, Asn106, Asn111, Asn147, Asn170, and Asn173. LRR repeat units lie at residues Phe99–Asn123, Asn125–Asn147, Leu148–Leu171, Thr172–Met195, and Phe197–Lys219. Residues Leu220–Lys240 form an LRR 6; degenerate repeat. 6 LRR repeats span residues Leu241–Ser265, Leu266–Pro291, Thr293–Thr313, Leu314–Leu338, Arg340–Asn363, and Ser364–Ile387. Asn253 carries an N-linked (GlcNAc...) asparagine glycan. Residues Asn348 and Asn363 are each glycosylated (N-linked (GlcNAc...) asparagine). The LRR 13; degenerate repeat unit spans residues Lys388 to Asn407. Residues Asn396, Asn407, Asn420, Asn431, and Asn476 are each glycosylated (N-linked (GlcNAc...) asparagine). LRR repeat units follow at residues Arg408–Leu429, Ser430–Gly453, Ser455–Cys477, Ser479–Ala500, Leu501–Pro525, Phe528–Asn552, Leu601–Leu625, Lys626–Ala649, Thr650–Leu673, and Tyr678–Glu700. N-linked (GlcNAc...) asparagine glycans are attached at residues Asn632 and Asn648. N-linked (GlcNAc...) asparagine glycosylation is present at Asn680. A helical membrane pass occupies residues Ala740–Ala760. Residues Ser761–Phe778 are Cytoplasmic-facing.

Belongs to the RLP family.

It localises to the cell membrane. The protein is Receptor like protein 28 of Arabidopsis thaliana (Mouse-ear cress).